Here is a 164-residue protein sequence, read N- to C-terminus: Putative 4-hydroxy-4-methyl-2-oxoglutarate aldolase (164 aa).

Substrate-binding positions include glycine 75–isoleucine 78 and arginine 97. Aspartate 98 lines the a divalent metal cation pocket.

It belongs to the class II aldolase/RraA-like family. Homotrimer. Requires a divalent metal cation as cofactor.

The catalysed reaction is 4-hydroxy-4-methyl-2-oxoglutarate = 2 pyruvate. It carries out the reaction oxaloacetate + H(+) = pyruvate + CO2. Catalyzes the aldol cleavage of 4-hydroxy-4-methyl-2-oxoglutarate (HMG) into 2 molecules of pyruvate. Also contains a secondary oxaloacetate (OAA) decarboxylase activity due to the common pyruvate enolate transition state formed following C-C bond cleavage in the retro-aldol and decarboxylation reactions. This Shewanella oneidensis (strain ATCC 700550 / JCM 31522 / CIP 106686 / LMG 19005 / NCIMB 14063 / MR-1) protein is Putative 4-hydroxy-4-methyl-2-oxoglutarate aldolase.